Consider the following 145-residue polypeptide: UPF0763 protein CFF8240_1572 (145 aa).

This sequence belongs to the UPF0763 family.

The sequence is that of UPF0763 protein CFF8240_1572 from Campylobacter fetus subsp. fetus (strain 82-40).